The chain runs to 568 residues: 2-succinyl-5-enolpyruvyl-6-hydroxy-3-cyclohexene-1-carboxylate synthase (568 aa).

The protein belongs to the TPP enzyme family. MenD subfamily. As to quaternary structure, homodimer. It depends on Mg(2+) as a cofactor. Requires Mn(2+) as cofactor. Thiamine diphosphate is required as a cofactor.

It catalyses the reaction isochorismate + 2-oxoglutarate + H(+) = 5-enolpyruvoyl-6-hydroxy-2-succinyl-cyclohex-3-ene-1-carboxylate + CO2. It participates in quinol/quinone metabolism; 1,4-dihydroxy-2-naphthoate biosynthesis; 1,4-dihydroxy-2-naphthoate from chorismate: step 2/7. It functions in the pathway cofactor biosynthesis; phylloquinone biosynthesis. Its function is as follows. Catalyzes the thiamine diphosphate-dependent decarboxylation of 2-oxoglutarate and the subsequent addition of the resulting succinic semialdehyde-thiamine pyrophosphate anion to isochorismate to yield 2-succinyl-5-enolpyruvyl-6-hydroxy-3-cyclohexene-1-carboxylate (SEPHCHC). The chain is 2-succinyl-5-enolpyruvyl-6-hydroxy-3-cyclohexene-1-carboxylate synthase from Synechococcus sp. (strain CC9902).